The sequence spans 77 residues: uncharacterized protein (77 aa).

Positions 13 to 67 (VLQYMVNNDYSLNQLALEIGVSPATLSRVLNGERRPGQLVIGKMLHYFNLKFEDL) constitute an HTH cro/C1-type domain. The H-T-H motif DNA-binding region spans 24-43 (LNQLALEIGVSPATLSRVLN).

It is found in the cytoplasm. This is an uncharacterized protein from Bacillus subtilis (strain 168).